The chain runs to 409 residues: ATPase ASNA1 homolog (409 aa).

Residue 21–28 participates in ATP binding; it reads KGGVGKTT. Asp-62 is a catalytic residue. The ATP site is built by Glu-303 and Asn-330. Zn(2+) contacts are provided by Cys-342 and Cys-345.

This sequence belongs to the arsA ATPase family. As to quaternary structure, homodimer.

The protein localises to the cytoplasm. It is found in the endoplasmic reticulum. ATPase required for the post-translational delivery of tail-anchored (TA) proteins to the endoplasmic reticulum. Recognizes and selectively binds the transmembrane domain of TA proteins in the cytosol. This complex then targets to the endoplasmic reticulum by membrane-bound receptors, where the tail-anchored protein is released for insertion. This process is regulated by ATP binding and hydrolysis. ATP binding drives the homodimer towards the closed dimer state, facilitating recognition of newly synthesized TA membrane proteins. ATP hydrolysis is required for insertion. Subsequently, the homodimer reverts towards the open dimer state, lowering its affinity for the membrane-bound receptor, and returning it to the cytosol to initiate a new round of targeting. In Leishmania infantum, this protein is ATPase ASNA1 homolog.